Consider the following 180-residue polypeptide: Large ribosomal subunit protein uL5 (180 aa).

This sequence belongs to the universal ribosomal protein uL5 family. In terms of assembly, part of the 50S ribosomal subunit; part of the 5S rRNA/L5/L18/L25 subcomplex. Contacts the 5S rRNA and the P site tRNA. Forms a bridge to the 30S subunit in the 70S ribosome.

Its function is as follows. This is one of the proteins that bind and probably mediate the attachment of the 5S RNA into the large ribosomal subunit, where it forms part of the central protuberance. In the 70S ribosome it contacts protein S13 of the 30S subunit (bridge B1b), connecting the 2 subunits; this bridge is implicated in subunit movement. Contacts the P site tRNA; the 5S rRNA and some of its associated proteins might help stabilize positioning of ribosome-bound tRNAs. The chain is Large ribosomal subunit protein uL5 from Chlamydia trachomatis serovar L2 (strain ATCC VR-902B / DSM 19102 / 434/Bu).